Here is a 410-residue protein sequence, read N- to C-terminus: Protein translocase subunit SecY (410 aa).

The next 9 helical transmembrane spans lie at 61-81 (LSVFALGIIPYINATITIQIL), 106-126 (ITKYLSFCFAFIESLAIVLRL), 135-155 (LYFIVQTTLILISGAMLVMWL), 170-190 (VIIFVNIASAFAKFLLNQLFV), 195-215 (FLDFASYFALIVFSIACIVFV), 248-268 (QGGVMPIILASSLLALVDYVI), 289-309 (ILFLLLYSAFIIFFNYLYCSL), 349-369 (LFGSGFLAFIVLAPNFLEFVF), and 373-393 (VFKGLAVSSLLIVVGVAIDLI).

It belongs to the SecY/SEC61-alpha family. In terms of assembly, component of the plastid Sec protein translocase complex, which is composed of at least SecY and SecE.

The protein localises to the plastid. It is found in the chloroplast thylakoid membrane. In terms of biological role, the central subunit of the protein translocation channel SecYE. Consists of two halves formed by TMs 1-5 and 6-10. These two domains form a lateral gate at the front which open onto the bilayer between TMs 2 and 7, and are clamped together by SecE at the back. The channel is closed by both a pore ring composed of hydrophobic SecY resides and a short helix (helix 2A) on the extracellular side of the membrane which forms a plug. In Cyanidium caldarium (Red alga), this protein is Protein translocase subunit SecY.